Consider the following 403-residue polypeptide: MASLQLCDGYLLFKPSVSPRFLSQRISHRLIPKASSSPPPSPSPSSSSSSLSFSRRELLYQSAAVSLSLSSIVGPARADEQLSEWERVFLPIDPGVVLLDIAFVPDEPSRGFLLGTRQTLLETKDGGSTWNPRSIPSAEEEDFNYRFNSISFKGKEGWIIGKPAILLYTADAGENWDRIPLSSQLPGDMVFIKATEDKSAEMVTDEGAIYVTSNRGYNWKAAIQETVSATLNRTVSSGISGASYYTGTFSAVNRSPDGRYVAVSSRGNFFLTWEPGQPYWQPHNRAVARRIQNMGWRADGGLWLLVRGGGLYLSKGTGITEEFEEVPVQSRGFGILDVGYRSEEEAWAAGGSGILLRTRNGGKSWNRDKAADNIAANLYAVKFVDDKKGFVLGNDGVLLRYVG.

A chloroplast-targeting transit peptide spans 1 to 53 (MASLQLCDGYLLFKPSVSPRFLSQRISHRLIPKASSSPPPSPSPSSSSSSLSF). Residues 31–50 (IPKASSSPPPSPSPSSSSSS) are disordered. The transit peptide at 54 to 78 (SRRELLYQSAAVSLSLSSIVGPARA) directs the protein to the thylakoid.

The protein belongs to the Ycf48 family. Interacts with PAM68. In terms of tissue distribution, expression in green tissue, not roots.

It is found in the plastid. The protein localises to the chloroplast thylakoid lumen. Essential for photosystem II (PSII) biogenesis; required for assembly of an early intermediate in PSII assembly that includes D2 (psbD) and cytochrome b559. Has been suggested to be required for chlorophyll a binding. The protein is Photosystem II stability/assembly factor HCF136, chloroplastic (HCF136) of Arabidopsis thaliana (Mouse-ear cress).